The primary structure comprises 197 residues: Prefoldin subunit 3 (197 aa).

Alanine 2 is subject to N-acetylalanine. Lysine 59 carries the N6-acetyllysine modification.

The protein belongs to the prefoldin subunit alpha family. As to quaternary structure, heterohexamer of two PFD-alpha type and four PFD-beta type subunits. Binds to the C-terminal part of VHL.

Its subcellular location is the cytoplasm. It is found in the nucleus. Its function is as follows. Binds specifically to cytosolic chaperonin (c-CPN) and transfers target proteins to it. Binds to nascent polypeptide chain and promotes folding in an environment in which there are many competing pathways for nonnative proteins. This chain is Prefoldin subunit 3 (VBP1), found in Bos taurus (Bovine).